Consider the following 358-residue polypeptide: UPF0421 protein BT9727_2513 (358 aa).

The next 4 membrane-spanning stretches (helical) occupy residues 19–39 (IAVFLTVLVCEFFNIPTIFAV), 74–94 (FTFFLGHQALSYALAAMFTIV), 109–129 (TLTAVAMIPITADHYFTAFLI), and 131–151 (LATTSTGIIVSTVVNFFILPP).

The protein belongs to the UPF0421 family.

It is found in the cell membrane. The sequence is that of UPF0421 protein BT9727_2513 from Bacillus thuringiensis subsp. konkukian (strain 97-27).